Consider the following 55-residue polypeptide: Large ribosomal subunit protein bL33 (55 aa).

Belongs to the bacterial ribosomal protein bL33 family.

This is Large ribosomal subunit protein bL33 from Buchnera aphidicola subsp. Schizaphis graminum (strain Sg).